The chain runs to 382 residues: Fimbrial usher domain-containing protein YdeT (382 aa).

The protein is Fimbrial usher domain-containing protein YdeT (ydeT) of Escherichia coli (strain K12).